Consider the following 372-residue polypeptide: Caytaxin (372 aa).

Residues 1 to 58 (MGTTEATLRMENVDVRDEWQDEDLPRPLPEDTGVERLGGAVEDSSSPPSTLNLSGAHR) form a disordered region. Over residues 11-29 (ENVDVRDEWQDEDLPRPLP) the composition is skewed to basic and acidic residues. A compositionally biased stretch (polar residues) spans 43–53 (DSSSPPSTLNL). Ser-54 carries the post-translational modification Phosphoserine. The tract at residues 115-120 (ELEWED) is required for interaction with KLC1. The CRAL-TRIO domain maps to 171–328 (IRPYMKVVTH…CVLQYEEQRL (158 aa)). The segment at 190–372 (AIIVFAACFL…ATEDQETSMS (183 aa)) is mediates interaction with GLS. The segment at 329 to 372 (RAKRESTRPPQPEFLLPRSEEKPETVEEEDRAAEATEDQETSMS) is disordered. The span at 354 to 372 (VEEEDRAAEATEDQETSMS) shows a compositional bias: acidic residues.

In terms of assembly, interacts with KLC1; may link mitochondria to KLC1 and regulate mitochondria localization into neuron projections. Interacts with GLS; the interaction is direct and may control GLS localization, negatively regulating its activity. Interacts with PIN1 (via WW domain); upon NGF stimulation. The interaction with PIN1 and GLS is competitive. Cleaved by CASP3 and CASP7. The potential C-terminal product released by CASP3 cleavage may inhibit the ERK signaling pathway through MAP2K2. Post-translationally, may be ubiquitinated by STUB1. As to expression, neuronal tissues specific. Strongly expressed in brain. Expressed in virtually all parts of the adult brain, including cortex, cerebellum and olfactory bulbs. Enriched in hippocampus, cerebellar cortex, deep cerebellar nuclei, and pontine nuclei (at protein level).

The protein resides in the cell projection. It localises to the axon. The protein localises to the dendrite. It is found in the presynapse. Its subcellular location is the mitochondrion. The protein resides in the growth cone. It localises to the cytoplasm. In terms of biological role, functions in the development of neural tissues, particularly the postnatal maturation of the cerebellar cortex. May play a role in neurotransmission through regulation of glutaminase/GLS, an enzyme responsible for the production in neurons of the glutamate neurotransmitter. Alternatively, may regulate the localization of mitochondria within axons and dendrites. The chain is Caytaxin (Atcay) from Mus musculus (Mouse).